A 295-amino-acid chain; its full sequence is MSLGALISESRNPATMELDKLSTLAMLTCINDEDRKVPDAIRLVLPAVAQAVDLAADALKQGGRLIYLGAGTSGRLGVLDASECPPTFGVPHGMVIGLIAGGPGALLKAVEGAEDDIALGMRDLQDLQLTATDMVVGLAASGRTPYVIGALRYARELGCPTAAISCNPDSPIAQEAQVAISPVVGPEALTGSTRMKSGTAQKLVLNMLSTGAMVKLGKVYQNLMVDVKATNVKLVDRACRIVVEATGVSRAEAEHALRQTDFEVKPAILMLLKGVSAEQARQDLRQHHGYLRAAL.

Residues 55–218 (AADALKQGGR…STGAMVKLGK (164 aa)) form the SIS domain. Glutamate 83 acts as the Proton donor in catalysis. Glutamate 114 is an active-site residue.

It belongs to the GCKR-like family. MurNAc-6-P etherase subfamily. As to quaternary structure, homodimer.

It carries out the reaction N-acetyl-D-muramate 6-phosphate + H2O = N-acetyl-D-glucosamine 6-phosphate + (R)-lactate. It functions in the pathway amino-sugar metabolism; 1,6-anhydro-N-acetylmuramate degradation. It participates in amino-sugar metabolism; N-acetylmuramate degradation. Its pathway is cell wall biogenesis; peptidoglycan recycling. Its function is as follows. Specifically catalyzes the cleavage of the D-lactyl ether substituent of MurNAc 6-phosphate, producing GlcNAc 6-phosphate and D-lactate. Together with AnmK, is also required for the utilization of anhydro-N-acetylmuramic acid (anhMurNAc) either imported from the medium or derived from its own cell wall murein, and thus plays a role in cell wall recycling. This Yersinia pseudotuberculosis serotype O:1b (strain IP 31758) protein is N-acetylmuramic acid 6-phosphate etherase.